A 292-amino-acid polypeptide reads, in one-letter code: Alpha-soluble NSF attachment protein (292 aa).

Position 2 is an N-acetylserine (S2). Residue K261 forms a Glycyl lysine isopeptide (Lys-Gly) (interchain with G-Cter in ubiquitin) linkage.

The protein belongs to the SNAP family. In terms of assembly, binds to vacuolar cis-SNARE complexes composed of the v-SNAREs NYV1, VTI1 and YKT6, and the t-SNAREs VAM3 and VAM7. Interacts with SEC18.

It is found in the membrane. Functionally, SNARE complex protein that binds to cis-SNARE complexes on membranes and is required for vesicular transport between the endoplasmic reticulum and the Golgi apparatus and for homotypic vacuole fusion. During the priming step of membrane fusion, is released from cis-SNARE complexes by SEC18 to establish a pool of unpaired SNAREs, which are required for interactions in trans during docking and fusion steps. Can displace HOPS from SNARE complexes, which may be a prerequisite for trans-SNARE complex disassembly and subsequent rounds of priming, docking and fusion. The sequence is that of Alpha-soluble NSF attachment protein (SEC17) from Saccharomyces cerevisiae (strain ATCC 204508 / S288c) (Baker's yeast).